Consider the following 424-residue polypeptide: Histidine--tRNA ligase (424 aa).

The protein belongs to the class-II aminoacyl-tRNA synthetase family. As to quaternary structure, homodimer.

The protein resides in the cytoplasm. The enzyme catalyses tRNA(His) + L-histidine + ATP = L-histidyl-tRNA(His) + AMP + diphosphate + H(+). This Bacillus velezensis (strain DSM 23117 / BGSC 10A6 / LMG 26770 / FZB42) (Bacillus amyloliquefaciens subsp. plantarum) protein is Histidine--tRNA ligase.